A 100-amino-acid chain; its full sequence is Urease subunit gamma (100 aa).

Belongs to the urease gamma subunit family. Heterotrimer of UreA (gamma), UreB (beta) and UreC (alpha) subunits. Three heterotrimers associate to form the active enzyme.

The protein resides in the cytoplasm. The catalysed reaction is urea + 2 H2O + H(+) = hydrogencarbonate + 2 NH4(+). Its pathway is nitrogen metabolism; urea degradation; CO(2) and NH(3) from urea (urease route): step 1/1. The sequence is that of Urease subunit gamma from Azoarcus sp. (strain BH72).